Consider the following 80-residue polypeptide: Exodeoxyribonuclease 7 small subunit (80 aa).

It belongs to the XseB family. As to quaternary structure, heterooligomer composed of large and small subunits.

The protein localises to the cytoplasm. It catalyses the reaction Exonucleolytic cleavage in either 5'- to 3'- or 3'- to 5'-direction to yield nucleoside 5'-phosphates.. Functionally, bidirectionally degrades single-stranded DNA into large acid-insoluble oligonucleotides, which are then degraded further into small acid-soluble oligonucleotides. This chain is Exodeoxyribonuclease 7 small subunit, found in Aliivibrio fischeri (strain ATCC 700601 / ES114) (Vibrio fischeri).